Consider the following 45-residue polypeptide: Large ribosomal subunit protein bL34 (45 aa).

Belongs to the bacterial ribosomal protein bL34 family.

This chain is Large ribosomal subunit protein bL34, found in Prochlorococcus marinus (strain MIT 9313).